Consider the following 400-residue polypeptide: NADH-quinone oxidoreductase subunit D (400 aa).

This sequence belongs to the complex I 49 kDa subunit family. In terms of assembly, NDH-1 is composed of 14 different subunits. Subunits NuoB, C, D, E, F, and G constitute the peripheral sector of the complex.

Its subcellular location is the cell inner membrane. It catalyses the reaction a quinone + NADH + 5 H(+)(in) = a quinol + NAD(+) + 4 H(+)(out). NDH-1 shuttles electrons from NADH, via FMN and iron-sulfur (Fe-S) centers, to quinones in the respiratory chain. The immediate electron acceptor for the enzyme in this species is believed to be a menaquinone. Couples the redox reaction to proton translocation (for every two electrons transferred, four hydrogen ions are translocated across the cytoplasmic membrane), and thus conserves the redox energy in a proton gradient. In Chlorobium phaeovibrioides (strain DSM 265 / 1930) (Prosthecochloris vibrioformis (strain DSM 265)), this protein is NADH-quinone oxidoreductase subunit D.